Here is a 424-residue protein sequence, read N- to C-terminus: Ornithine aminotransferase (424 aa).

Lys-272 is subject to N6-(pyridoxal phosphate)lysine. A Glycyl lysine isopeptide (Lys-Gly) (interchain with G-Cter in ubiquitin) cross-link involves residue Lys-390.

It belongs to the class-III pyridoxal-phosphate-dependent aminotransferase family. Pyridoxal 5'-phosphate serves as cofactor.

The protein resides in the cytoplasm. The enzyme catalyses a 2-oxocarboxylate + L-ornithine = L-glutamate 5-semialdehyde + an L-alpha-amino acid. It functions in the pathway amino-acid biosynthesis; L-proline biosynthesis; L-glutamate 5-semialdehyde from L-ornithine: step 1/1. By arginine and urea. Catalyzes the transamination of ornithine into L-glutamate gamma-semialdehyde, the second step of arginine degradation. This is Ornithine aminotransferase (CAR2) from Saccharomyces cerevisiae (strain ATCC 204508 / S288c) (Baker's yeast).